Reading from the N-terminus, the 468-residue chain is MATTVMALAEKVLERVYGTSKSAVSVTSGDGEKTHRHTHHHIHRIKSYDDIDEDESSLELIQIGAERTKNVLILMSDTGGGHRASAEAIRDAFKIEFGDKYRVIVKDVWKEYTGWPLNDMERSYKFMVKHVQLWKVAFHSTSPKWIHSCYLAAIAAYYAKEVEAGLMEYKPEIIISVHPLMQHIPLWVLKWQELQKRVLFVTVITDLNTCHPTWFHPGVNRCYCPSQEVAKRALFDGLDESQVRVFGLPVRPSFARAVLVKDDLRKELEMDQDLRAVLLMGGGEGMGPVKETAKALEEFLYDKENRKPIGQMVVICGRNKKLASALEAIDWKIPVKVRGFETQMEKWMGACDCIITKAGPGTIAESLIRSLPIILNDYIPGQEKGNVPYVVENGAGVFTRSPKETARIVGEWFSTKTDELEQTSDNARKLAQPEAVFDIVKDIDELSEQRGPLASVSYNLTSSFASLV.

Residues histidine 82, arginine 251, 361–365 (GTIAE), and glutamate 383 each bind UDP.

It belongs to the glycosyltransferase 28 family. As to expression, expressed mainly in floral buds. Detected in roots, leaves, stems, siliques and pollen tubes.

It is found in the plastid. The protein localises to the chloroplast outer membrane. It catalyses the reaction a 1,2-diacyl-sn-glycerol + UDP-alpha-D-galactose = a 1,2-diacyl-3-O-(beta-D-galactosyl)-sn-glycerol + UDP + H(+). The catalysed reaction is 1,2-di-(9Z,12Z-octadecadienoyl)-sn-glycerol + UDP-alpha-D-galactose = 1,2-di-(9Z,12Z-octadecadienoyl)-3-beta-D-galactosyl-sn-glycerol + UDP + H(+). It carries out the reaction 1-(9Z-octadecenoyl)-2-hexadecanoyl-sn-glycerol + UDP-alpha-D-galactose = 1-(9Z-octadecenoyl)-2-hexadecanoyl-3-beta-D-galactosyl-sn-glycerol + UDP + H(+). The enzyme catalyses 1,2-di-(9Z-octadecenoyl)-sn-glycerol + UDP-alpha-D-galactose = 1,2-di-(9Z-octadecenoyl)-3-beta-D-galactosyl-sn-glycerol + UDP + H(+). With respect to regulation, inhibited by galvestine-1. Involved in the synthesis of monogalactosyldiacylglycerol, the major structural component of photosynthetic membranes and in the chloroplast envelope biogenesis. Can use both prokaryotic (18:1/16:0) or eukaryotic (18:2/18:2) 1,2-diacylglycerol species, but operates with some preference for the eukaryotic one. Plays a minor role in galactolipid synthesis in chloroplasts. Is required for membrane lipid remodeling in phosphate-starved roots. Acts as the minor factor involved in digalactosyldiacylglycerol (DGDG) biosynthesis in phosphate-starved roots. Does not seem to be required for plant growth under nutrient-sufficient conditions. Required for membrane lipid remodeling in plants grown in acidic conditions. This chain is Monogalactosyldiacylglycerol synthase 2, chloroplastic, found in Arabidopsis thaliana (Mouse-ear cress).